The chain runs to 109 residues: Iron-sulfur cluster assembly protein CyaY (109 aa).

This sequence belongs to the frataxin family.

Functionally, involved in iron-sulfur (Fe-S) cluster assembly. May act as a regulator of Fe-S biogenesis. This is Iron-sulfur cluster assembly protein CyaY from Bordetella avium (strain 197N).